A 263-amino-acid polypeptide reads, in one-letter code: Polyglutamine-binding protein 1 (263 aa).

The WW domain occupies 46-80 (EGLPPSWYKVFDPSCGLPYYWNVETDLVSWLSPHD). Positions 94–263 (NNNADAEDKS…AEASRTKQQD (170 aa)) are disordered. Residues 99-173 (AEDKSDRNLE…DKADREEGKD (75 aa)) show a composition bias toward basic and acidic residues. Residues 104-110 (DRNLEKV) form a 1-1; approximate repeat. Residues 104 to 138 (DRNLEKVDRNHEKSDRSHEKPDRSHEKADRNHEKN) are 5 X 7 AA approximate tandem repeats of D-R-[NS]-H-E-K-S. One copy of the 1-2 repeat lies at 111-117 (DRNHEKS). Residues 118 to 124 (DRSHEKP) form a 1-3; approximate repeat. The 1-4; approximate repeat unit spans residues 125-131 (DRSHEKA). Residues 132 to 138 (DRNHEKN) form a 1-5; approximate repeat. Tandem repeats lie at residues 139 to 140 (DR), 141 to 142 (ER), 143 to 144 (ER), 150 to 151 (DR), 152 to 153 (ER), 154 to 155 (DR), 156 to 157 (DR), 158 to 159 (ER), and 160 to 161 (ER). The interval 139–144 (DRERER) is 3 X 2 AA tandem repeats of [DE]-R. The interval 150–161 (DRERDRDRERER) is 6 X 2 AA tandem repeats of [DE]-R. Residues 243–253 (YPSPGAVLRAN) are important for interaction with TXNL4A. Position 245 is a phosphoserine (S245).

In terms of assembly, interacts with POU3F2/Brn-2, ATXN1, TXNL4A, HTT and AR. Interaction with ATXN1 correlates positively with the length of the polyglutamine tract. Interacts with RNA polymerase II large subunit in a phosphorylation-dependent manner. Forms a ternary complex with ATXN1 mutant and phosphorylated RNA polymerase II. Interacts (via C-terminus) with TXNL4A and CD2BP2. Interacts (via WW domain) with ATN1 and SF3B1, and may interact with additional splice factors. Interacts (via WW domain) with WBP11; Leading to reduce interaction between PQBP1 and TXNL4A. Interacts with CAPRIN1. Interacts with DDX1. Interacts with SFPQ. Interacts with KHSRP. In terms of tissue distribution, detected in brain cortex and hippocampus neurons (at protein level). Expressed in brain with high level in cerebellar cortex, hippocampus and olfactory bulb.

It localises to the nucleus. The protein localises to the nucleus speckle. It is found in the cytoplasmic granule. Intrinsically disordered protein that acts as a scaffold, and which is involved in different processes, such as pre-mRNA splicing, transcription regulation, innate immunity and neuron development. Interacts with splicing-related factors via the intrinsically disordered region and regulates alternative splicing of target pre-mRNA species. May suppress the ability of POU3F2 to transactivate the DRD1 gene in a POU3F2 dependent manner. Can activate transcription directly or via association with the transcription machinery. May be involved in ATXN1 mutant-induced cell death. The interaction with ATXN1 mutant reduces levels of phosphorylated RNA polymerase II large subunit. Involved in the assembly of cytoplasmic stress granule, possibly by participating in the transport of neuronal RNA granules. Also acts as an innate immune sensor of infection by retroviruses, by detecting the presence of reverse-transcribed DNA in the cytosol. Directly binds retroviral reverse-transcribed DNA in the cytosol and interacts with CGAS, leading to activate the cGAS-STING signaling pathway, triggering type-I interferon production. The polypeptide is Polyglutamine-binding protein 1 (Pqbp1) (Mus musculus (Mouse)).